Here is a 139-residue protein sequence, read N- to C-terminus: Ribosome-binding factor A (139 aa).

Belongs to the RbfA family. Monomer. Binds 30S ribosomal subunits, but not 50S ribosomal subunits or 70S ribosomes.

The protein resides in the cytoplasm. In terms of biological role, one of several proteins that assist in the late maturation steps of the functional core of the 30S ribosomal subunit. Associates with free 30S ribosomal subunits (but not with 30S subunits that are part of 70S ribosomes or polysomes). Required for efficient processing of 16S rRNA. May interact with the 5'-terminal helix region of 16S rRNA. The sequence is that of Ribosome-binding factor A from Methylobacterium sp. (strain 4-46).